Reading from the N-terminus, the 367-residue chain is tRNA 2-selenouridine synthase (367 aa).

In terms of domain architecture, Rhodanese spans 14–137; it reads FLNDVPLMDV…LRRFLIDSLE (124 aa). Cysteine 97 (S-selanylcysteine intermediate) is an active-site residue.

Belongs to the SelU family. As to quaternary structure, monomer.

It carries out the reaction 5-methylaminomethyl-2-thiouridine(34) in tRNA + selenophosphate + (2E)-geranyl diphosphate + H2O + H(+) = 5-methylaminomethyl-2-selenouridine(34) in tRNA + (2E)-thiogeraniol + phosphate + diphosphate. The enzyme catalyses 5-methylaminomethyl-2-thiouridine(34) in tRNA + (2E)-geranyl diphosphate = 5-methylaminomethyl-S-(2E)-geranyl-thiouridine(34) in tRNA + diphosphate. It catalyses the reaction 5-methylaminomethyl-S-(2E)-geranyl-thiouridine(34) in tRNA + selenophosphate + H(+) = 5-methylaminomethyl-2-(Se-phospho)selenouridine(34) in tRNA + (2E)-thiogeraniol. The catalysed reaction is 5-methylaminomethyl-2-(Se-phospho)selenouridine(34) in tRNA + H2O = 5-methylaminomethyl-2-selenouridine(34) in tRNA + phosphate. Involved in the post-transcriptional modification of the uridine at the wobble position (U34) of tRNA(Lys), tRNA(Glu) and tRNA(Gln). Catalyzes the conversion of 2-thiouridine (S2U-RNA) to 2-selenouridine (Se2U-RNA). Acts in a two-step process involving geranylation of 2-thiouridine (S2U) to S-geranyl-2-thiouridine (geS2U) and subsequent selenation of the latter derivative to 2-selenouridine (Se2U) in the tRNA chain. The polypeptide is tRNA 2-selenouridine synthase (Marinobacter nauticus (strain ATCC 700491 / DSM 11845 / VT8) (Marinobacter aquaeolei)).